The chain runs to 451 residues: Target of rapamycin complex 1 subunit tco89 (451 aa).

A disordered region spans residues 1–35; sequence MERPSLSRRTSSSTVSTDGEGVYSRSTKERKRNFI. Positions 7-17 are enriched in low complexity; that stretch reads SRRTSSSTVST. The residue at position 70 (Ser-70) is a Phosphoserine. 3 disordered regions span residues 122 to 164, 176 to 264, and 362 to 437; these read WDDA…PVTR, INSN…GNSL, and NQNF…DTDY. The span at 129–162 shows a compositional bias: polar residues; sequence NDSTAGNLDSDSALPTPSVTTNEAADSSRASSPV. Over residues 203 to 215 the composition is skewed to low complexity; that stretch reads DDSAADASTTKSS. 3 stretches are compositionally biased toward polar residues: residues 228 to 242, 362 to 376, and 407 to 417; these read HSNNREVTQATNQPK, NQNFDSQNAFNTSAA, and QSASLNASMSA. Positions 419–430 are enriched in basic residues; the sequence is SHARQRSIHVPK.

This sequence belongs to the TORC subunit TCO89 family. The target of rapamycin complex 1 (TORC1) is composed of at least mip1, pop3/wat1, tco89, toc1 and tor2. Post-translationally, either Thr-10, Ser-11, Ser-12, Ser-13 or Thr-14 and Ser-214 or Ser-215 and Ser-247 or Ser-249 are phosphorylated as well.

It is found in the cytoplasm. Its function is as follows. Component of TORC1, which regulates multiple cellular processes to control cell growth in response to environmental signals. Tor2 is essential for growth. Nutrient limitation and environmental stress signals cause inactivation of TORC1. Active TORC1 positively controls cell growth and ribosome biogenesis by regulating ribosomal protein gene expression. TORC1 negatively controls G1 cell-cycle arrest, sexual development and amino acid uptake. Represses mating, meiosis and sporulation efficiency by interfering with the functions of the transcription factor ste11 and the meiosis-promoting RNA-binding protein mei2. This chain is Target of rapamycin complex 1 subunit tco89, found in Schizosaccharomyces pombe (strain 972 / ATCC 24843) (Fission yeast).